We begin with the raw amino-acid sequence, 609 residues long: Sterol O-acyltransferase 2 (609 aa).

Polar residues predominate over residues 1–15 (MGRTNTSDQLNAISD). A disordered region spans residues 1–41 (MGRTNTSDQLNAISDKNTKRKSLALDNEYHNNSSSEDDSSK). 6 consecutive transmembrane segments (helical) span residues 152–172 (FFGM…NNLI), 195–215 (LFKV…AFFV), 229–249 (VGWW…LWIA), 253–273 (CLDF…VFIM), 402–422 (WSYV…MILI), and 451–471 (FLLM…FFLI). Positions 490 to 496 (FYGPWWS) match the FYXDWWN motif motif. The next 2 helical transmembrane spans lie at 534 to 554 (AAII…YVIF) and 589 to 609 (IICW…YLVF). The active site involves histidine 546.

The protein belongs to the membrane-bound acyltransferase family. Sterol o-acyltransferase subfamily.

Its subcellular location is the endoplasmic reticulum membrane. Inhibited by the protoberberine derivative HWY-289 in a non-competitive manner. Inhibited by miconazole. Not inhibited by CI-976, polyoxin D, amphotericin B or nikkomycin Z. Its function is as follows. Sterol O-acyltransferase that catalyzes the formation of stery esters. In Candida albicans (Yeast), this protein is Sterol O-acyltransferase 2.